Reading from the N-terminus, the 1461-residue chain is Regulation of nuclear pre-mRNA domain-containing protein 2 (1461 aa).

The residue at position 2 (Ala-2) is an N-acetylalanine. Ser-16 bears the Phosphoserine mark. Residues 19 to 149 (SAGALESSLD…ALREALSTTF (131 aa)) enclose the CID domain. Disordered regions lie at residues 311-438 (STLP…TSLS) and 469-504 (NTGV…TTSH). Positions 352 to 368 (ESEKSATPEPVTDNRDV) are enriched in basic and acidic residues. Position 356 is a phosphoserine (Ser-356). Thr-358 carries the post-translational modification Phosphothreonine. A compositionally biased stretch (acidic residues) spans 369–378 (EDMELSDVED). Ser-374 carries the phosphoserine modification. Positions 379 to 394 (DGSKIIVEDRKEKPAE) are enriched in basic and acidic residues. Polar residues predominate over residues 397–416 (AVSTSVPTKPTENISKASSC). Low complexity-rich tracts occupy residues 417–426 (TPVPVTMTAT) and 473–491 (SPAS…NLTS). Residues Ser-473, Ser-476, and Ser-479 each carry the phosphoserine modification. At Thr-482 the chain carries Phosphothreonine. Ser-485 is subject to Phosphoserine. Thr-517 is modified (phosphothreonine). Residues 547-623 (TGNPVPASEA…SPGLPSTTFK (77 aa)) form a disordered region. Residues 553 to 566 (ASEAASQSTSASPA) are compositionally biased toward low complexity. Ser-564 carries the phosphoserine modification. Positions 567 to 583 (NTTVSTIKGRNLPSSAQ) are enriched in polar residues. Position 593 is a phosphoserine (Ser-593). Over residues 593-614 (SPNSSTSEVSSTSASKASIGQS) the composition is skewed to low complexity. Position 598 is a phosphothreonine (Thr-598). Phosphoserine occurs at positions 614, 663, 665, and 716. 5 disordered regions span residues 696-849 (GSSA…MMNL), 900-997 (SENC…EKVL), 1016-1102 (ASRK…SGEP), 1132-1312 (STSG…APPL), and 1340-1461 (FGVL…PPRY). Thr-723 carries the phosphothreonine modification. At Ser-730 the chain carries Phosphoserine. Position 732 is a phosphothreonine (Thr-732). The segment covering 742–752 (PTSSSVDTMSL) has biased composition (polar residues). A phosphoserine mark is found at Ser-758 and Ser-762. Low complexity predominate over residues 758–768 (SPGSSTPSSTR). Phosphothreonine is present on Thr-763. A phosphoserine mark is found at Ser-769, Ser-817, Ser-826, Ser-900, Ser-909, Ser-928, Ser-965, and Ser-976. A compositionally biased stretch (polar residues) spans 927-954 (RSPSPSKNDSFFTPDSNHNSLSQSTTGH). Residues 1031-1055 (SKGTPSDGVSLSNLTQPSLTATDQQ) are compositionally biased toward polar residues. 2 positions are modified to phosphoserine: Ser-1068 and Ser-1099. The span at 1141 to 1150 (GPSSASELAS) shows a compositional bias: low complexity. Gly residues predominate over residues 1151 to 1160 (LGGGGSGGLT). Residues 1174–1189 (FQESVGSFRSNSFNST) show a composition bias toward polar residues. Composition is skewed to pro residues over residues 1267–1277 (FPTPPPPPPPG) and 1290–1299 (STPPPPPPPV). The residue at position 1366 (Arg-1366) is an Asymmetric dimethylarginine. Gly residues predominate over residues 1382 to 1391 (PHGGGGGGGS). Positions 1417–1434 (PRPDFRPREPFLSRDPFH) are enriched in basic and acidic residues. Asymmetric dimethylarginine occurs at positions 1424 and 1430.

As to quaternary structure, associates with the RNA polymerase II complex.

In Homo sapiens (Human), this protein is Regulation of nuclear pre-mRNA domain-containing protein 2 (RPRD2).